Consider the following 264-residue polypeptide: Thiazole synthase (264 aa).

Catalysis depends on K106, which acts as the Schiff-base intermediate with DXP. Residues G167, 193-194, and 215-216 each bind 1-deoxy-D-xylulose 5-phosphate; these read AG and NS.

It belongs to the ThiG family. As to quaternary structure, homotetramer. Forms heterodimers with either ThiH or ThiS.

Its subcellular location is the cytoplasm. It carries out the reaction [ThiS sulfur-carrier protein]-C-terminal-Gly-aminoethanethioate + 2-iminoacetate + 1-deoxy-D-xylulose 5-phosphate = [ThiS sulfur-carrier protein]-C-terminal Gly-Gly + 2-[(2R,5Z)-2-carboxy-4-methylthiazol-5(2H)-ylidene]ethyl phosphate + 2 H2O + H(+). It functions in the pathway cofactor biosynthesis; thiamine diphosphate biosynthesis. Functionally, catalyzes the rearrangement of 1-deoxy-D-xylulose 5-phosphate (DXP) to produce the thiazole phosphate moiety of thiamine. Sulfur is provided by the thiocarboxylate moiety of the carrier protein ThiS. In vitro, sulfur can be provided by H(2)S. The protein is Thiazole synthase of Pseudomonas fluorescens (strain Pf0-1).